A 634-amino-acid polypeptide reads, in one-letter code: MNQPIGIADSSRPKTNVRLTISANNLMDLDVFSKSDPICLIYEKTSGRKATTTEEITVPTWKDKQWTERGRTEVVMNNLNPQFTKTFLLPYFFEETQLLRFEIYDADSPTVGQDLSSHDFLGRFECVLAQIVSYSTLKAHLGKTGQIGAQWRNKDKNTKTGSITIYAEEDEKAEKIQFDVCGEGLDKKDFFGKSDPYLNFKRKFDDGSTHLIHRTEVKPKTLDPRWATVQINTQTLCAKDGDRPIIIECYDHDKWKKGEEPRGDAKFSRDDLIGTAQTTLNELLRGSSDAVEILLTNEKKKAKKGDKYKCSGTLKIWNSRIVIEPTFLDFISGGTQLDFAVAVDFTASNGPPKSSSSLHFMSADRPNQYELALRSVLSICQHYNSSKTFEAFGFGAKLPNQSSVSAIFPLDLQRGTSEVVGITGVMTAYRHALSNVQLYGPTNFAPIIENVARKAQNMIHDSARYQILLIITDGIISDMHATIRSIISASGLPLSIIIIGVGNEDFEKMHELDSDDALLQQDSRIAQRDIVQFVTMREFLNNGQGLYLDPDVIQENLAREVLYEVPAQLTGYMKQRGFQPRPVDDPWRRDSPPPEFDPILDGTGRRAPMLQAPPAGFQYPVYADTSIASAPPMY.

2 C2 domains span residues 1–141 and 159–295; these read MNQP…KAHL and KTGS…EILL. Ca(2+)-binding residues include leucine 29, aspartate 30, aspartate 36, aspartate 105, aspartate 107, aspartate 119, aspartate 189, aspartate 195, aspartate 251, aspartate 253, and aspartate 271. Residues 338–557 enclose the VWFA domain; the sequence is DFAVAVDFTA…LDPDVIQENL (220 aa). The disordered stretch occupies residues 576-603; it reads RGFQPRPVDDPWRRDSPPPEFDPILDGT. A compositionally biased stretch (basic and acidic residues) spans 582–592; that stretch reads PVDDPWRRDSP.

It belongs to the copine family. As to quaternary structure, interacts with nicotinic acetylcholine receptor. It depends on Ca(2+) as a cofactor. As to expression, expressed in head and tail neurons, ventral cord moto-neurons, body wall muscles and hypodermal cells of the vulva.

The protein localises to the cell membrane. In terms of biological role, exhibits calcium-dependent phospholipid binding properties. May function in membrane trafficking. Regulates synaptic levels of nicotinic acetylcholine receptor subunit lev-1 and unc-38 in the nerve cord. Involved in nicotinic acetylcholine receptor (nAChR)-mediated sensitivity to nicotine and levamisole. Affects directional sperm motility. The chain is Nicotinic receptor-associated protein 1 (nra-1) from Caenorhabditis elegans.